A 487-amino-acid polypeptide reads, in one-letter code: Bifunctional protein GlmU (487 aa).

The interval 1–232 (MAVIVLAAGA…AAELAGVNDR (232 aa)) is pyrophosphorylase. Residues 6 to 9 (LAAG), Lys20, Gln77, and 82 to 83 (GT) contribute to the UDP-N-acetyl-alpha-D-glucosamine site. Asp107 is a Mg(2+) binding site. UDP-N-acetyl-alpha-D-glucosamine-binding residues include Gly142, Glu157, Asn172, and Asn230. Asn230 is a Mg(2+) binding site. The interval 233 to 253 (VQLAAAGAELNRRTVTAAMRG) is linker. Positions 254 to 487 (GATIVDPATT…PTSTPQADQE (234 aa)) are N-acetyltransferase. UDP-N-acetyl-alpha-D-glucosamine is bound by residues Arg335 and Lys353. His365 serves as the catalytic Proton acceptor. UDP-N-acetyl-alpha-D-glucosamine is bound by residues Tyr368 and Asn379. Acetyl-CoA contacts are provided by residues Ala382, 388-389 (NY), Ser407, and Ala425. The tract at residues 453–487 (AKKRPGTPAAEAGEAAAKRVAEGGSPTSTPQADQE) is disordered. The segment covering 477–487 (SPTSTPQADQE) has biased composition (polar residues).

In the N-terminal section; belongs to the N-acetylglucosamine-1-phosphate uridyltransferase family. The protein in the C-terminal section; belongs to the transferase hexapeptide repeat family. Homotrimer. Mg(2+) serves as cofactor.

The protein resides in the cytoplasm. It catalyses the reaction alpha-D-glucosamine 1-phosphate + acetyl-CoA = N-acetyl-alpha-D-glucosamine 1-phosphate + CoA + H(+). It carries out the reaction N-acetyl-alpha-D-glucosamine 1-phosphate + UTP + H(+) = UDP-N-acetyl-alpha-D-glucosamine + diphosphate. Its pathway is nucleotide-sugar biosynthesis; UDP-N-acetyl-alpha-D-glucosamine biosynthesis; N-acetyl-alpha-D-glucosamine 1-phosphate from alpha-D-glucosamine 6-phosphate (route II): step 2/2. It participates in nucleotide-sugar biosynthesis; UDP-N-acetyl-alpha-D-glucosamine biosynthesis; UDP-N-acetyl-alpha-D-glucosamine from N-acetyl-alpha-D-glucosamine 1-phosphate: step 1/1. The protein operates within bacterial outer membrane biogenesis; LPS lipid A biosynthesis. Functionally, catalyzes the last two sequential reactions in the de novo biosynthetic pathway for UDP-N-acetylglucosamine (UDP-GlcNAc). The C-terminal domain catalyzes the transfer of acetyl group from acetyl coenzyme A to glucosamine-1-phosphate (GlcN-1-P) to produce N-acetylglucosamine-1-phosphate (GlcNAc-1-P), which is converted into UDP-GlcNAc by the transfer of uridine 5-monophosphate (from uridine 5-triphosphate), a reaction catalyzed by the N-terminal domain. The chain is Bifunctional protein GlmU from Corynebacterium jeikeium (strain K411).